Reading from the N-terminus, the 21-residue chain is Hemocyanin subunit 4 (21 aa).

The protein belongs to the tyrosinase family. Hemocyanin subfamily. In terms of tissue distribution, hemolymph.

The protein resides in the secreted. It localises to the extracellular space. In terms of biological role, hemocyanins are copper-containing oxygen carriers occurring freely dissolved in the hemolymph of many mollusks and arthropods. This Maja squinado (Mediterranean spider crab) protein is Hemocyanin subunit 4.